The chain runs to 522 residues: BTB/POZ domain-containing protein 16 (522 aa).

The 57-residue stretch at 166-222 (INDPAVTRVAFALALKNLYMKEVEMTVDNVLGVLASAHILQFNRLFQKCVNMMMNRL) folds into the BTB domain.

The sequence is that of BTB/POZ domain-containing protein 16 (Btbd16) from Mus musculus (Mouse).